We begin with the raw amino-acid sequence, 237 residues long: uncharacterized protein (237 aa).

Belongs to the bactofilin family.

This is an uncharacterized protein from Bacillus subtilis (strain 168).